A 478-amino-acid polypeptide reads, in one-letter code: UDP-N-acetylmuramate--L-alanine ligase (478 aa).

130-136 (GTHGKTT) lines the ATP pocket.

This sequence belongs to the MurCDEF family.

Its subcellular location is the cytoplasm. It carries out the reaction UDP-N-acetyl-alpha-D-muramate + L-alanine + ATP = UDP-N-acetyl-alpha-D-muramoyl-L-alanine + ADP + phosphate + H(+). The protein operates within cell wall biogenesis; peptidoglycan biosynthesis. Functionally, cell wall formation. This Microcystis aeruginosa (strain NIES-843 / IAM M-2473) protein is UDP-N-acetylmuramate--L-alanine ligase.